The following is a 110-amino-acid chain: Large ribosomal subunit protein uL22 (110 aa).

The protein belongs to the universal ribosomal protein uL22 family. Part of the 50S ribosomal subunit.

In terms of biological role, this protein binds specifically to 23S rRNA; its binding is stimulated by other ribosomal proteins, e.g. L4, L17, and L20. It is important during the early stages of 50S assembly. It makes multiple contacts with different domains of the 23S rRNA in the assembled 50S subunit and ribosome. Its function is as follows. The globular domain of the protein is located near the polypeptide exit tunnel on the outside of the subunit, while an extended beta-hairpin is found that lines the wall of the exit tunnel in the center of the 70S ribosome. The polypeptide is Large ribosomal subunit protein uL22 (Oleidesulfovibrio alaskensis (strain ATCC BAA-1058 / DSM 17464 / G20) (Desulfovibrio alaskensis)).